The sequence spans 511 residues: 2,3-bisphosphoglycerate-independent phosphoglycerate mutase (511 aa).

Residue D12 participates in Mn(2+) binding. Y36 carries the post-translational modification Phosphotyrosine. S62 serves as a coordination point for Mn(2+). Catalysis depends on S62, which acts as the Phosphoserine intermediate. Residues H123, 153 to 154 (RD), R185, R191, 261 to 264 (RPDR), and K336 contribute to the substrate site. Residues D403, H407, D444, H445, and H462 each coordinate Mn(2+).

Belongs to the BPG-independent phosphoglycerate mutase family. As to quaternary structure, monomer. It depends on Mn(2+) as a cofactor.

It carries out the reaction (2R)-2-phosphoglycerate = (2R)-3-phosphoglycerate. Its pathway is carbohydrate degradation; glycolysis; pyruvate from D-glyceraldehyde 3-phosphate: step 3/5. Its function is as follows. Essential for rapid growth and for sporulation. Catalyzes the interconversion of 2-phosphoglycerate and 3-phosphoglycerate. The chain is 2,3-bisphosphoglycerate-independent phosphoglycerate mutase from Bacillus pumilus (strain SAFR-032).